The chain runs to 326 residues: MAFISFPPRHPSASARLPLTLIALDDWALATITGVDSEKYIQGQVTADVSQMTEQQHLLTAHCDAKGKMWSNLRLFREREGFVWIERRSVREAQLTELKKYAVFSKVVIAPDDDRVLLGVAGFQARAALANVFSDLPNSENQVVRDGASTLLWFEHPAERFLLVTDVATVNMLTEKLHGEAELNNSQQWLALDIEAGIPVIDAANSGQFIPQATNLQALGGISFKKGCYTGQEMVARAKFRGANKRALWLLAGKASRVPEAGEDLELQMGENWRRTGAILAATQLDDGQLLVQAVMNNDLETESVFRVRDDVNTLHIIPLPYSLEE.

Folate contacts are provided by Trp-27 and Trp-189.

It belongs to the tRNA-modifying YgfZ family.

Its subcellular location is the cytoplasm. Folate-binding protein involved in regulating the level of ATP-DnaA and in the modification of some tRNAs. It is probably a key factor in regulatory networks that act via tRNA modification, such as initiation of chromosomal replication. In Salmonella arizonae (strain ATCC BAA-731 / CDC346-86 / RSK2980), this protein is tRNA-modifying protein YgfZ.